A 156-amino-acid polypeptide reads, in one-letter code: Small ribosomal subunit protein uS7 (156 aa).

The protein belongs to the universal ribosomal protein uS7 family. In terms of assembly, part of the 30S ribosomal subunit. Contacts proteins S9 and S11.

In terms of biological role, one of the primary rRNA binding proteins, it binds directly to 16S rRNA where it nucleates assembly of the head domain of the 30S subunit. Is located at the subunit interface close to the decoding center, probably blocks exit of the E-site tRNA. This chain is Small ribosomal subunit protein uS7, found in Desulfitobacterium hafniense (strain DSM 10664 / DCB-2).